Reading from the N-terminus, the 510-residue chain is ATP synthase subunit alpha (510 aa).

Residue 169–176 participates in ATP binding; it reads GDRQTGKT.

The protein belongs to the ATPase alpha/beta chains family. As to quaternary structure, F-type ATPases have 2 components, CF(1) - the catalytic core - and CF(0) - the membrane proton channel. CF(1) has five subunits: alpha(3), beta(3), gamma(1), delta(1), epsilon(1). CF(0) has four main subunits: a(1), b(1), b'(1) and c(9-12).

The protein resides in the cell inner membrane. It carries out the reaction ATP + H2O + 4 H(+)(in) = ADP + phosphate + 5 H(+)(out). In terms of biological role, produces ATP from ADP in the presence of a proton gradient across the membrane. The alpha chain is a regulatory subunit. This Rhodopseudomonas palustris (strain BisB5) protein is ATP synthase subunit alpha.